The sequence spans 276 residues: MNAIEALLFAVIQGVSELFPVSSLGHGVLIPDWLHWSINRTHPDFLPFMVMLHLGTAAALLIYFRRDWVDLIGGWLKAGGRASNPHARLMWLVIAGTLPAGLLGLLLEKQLRALFASTTAVLVFLALNGLLLLWGDKLKKKTASHELSELSFAGAIKIGAGQALALLPGFSRSGATLVAGLAHGLDYASSARFSFLLATPIITAAGLLEIPKLAHRGNGSAEWGLLLACGAVSGLCAYASTWFLMRYFKKTEIESLRPFGFYCLLVGVVGLLFKLV.

8 consecutive transmembrane segments (helical) span residues 4 to 24, 44 to 64, 87 to 107, 114 to 134, 150 to 170, 193 to 213, 225 to 245, and 256 to 276; these read IEAL…VSSL, DFLP…LIYF, ARLM…GLLL, LFAS…LLLW, LSFA…LPGF, FSFL…IPKL, LLLA…WFLM, and LRPF…FKLV.

This sequence belongs to the UppP family.

The protein localises to the cell inner membrane. The catalysed reaction is di-trans,octa-cis-undecaprenyl diphosphate + H2O = di-trans,octa-cis-undecaprenyl phosphate + phosphate + H(+). Functionally, catalyzes the dephosphorylation of undecaprenyl diphosphate (UPP). Confers resistance to bacitracin. This Chromobacterium violaceum (strain ATCC 12472 / DSM 30191 / JCM 1249 / CCUG 213 / NBRC 12614 / NCIMB 9131 / NCTC 9757 / MK) protein is Undecaprenyl-diphosphatase 2.